A 64-amino-acid polypeptide reads, in one-letter code: Small, acid-soluble spore protein beta (64 aa).

Belongs to the alpha/beta-type SASP family.

In terms of biological role, SASP are bound to spore DNA. They are double-stranded DNA-binding proteins that cause DNA to change to an a-like conformation. They protect the DNA backbone from chemical and enzymatic cleavage and are thus involved in dormant spore's high resistance to UV light. This Paraclostridium bifermentans (Clostridium bifermentans) protein is Small, acid-soluble spore protein beta.